The sequence spans 136 residues: Flagellar assembly factor FliW 2 (136 aa).

Belongs to the FliW family. As to quaternary structure, interacts with translational regulator CsrA and flagellin(s).

It localises to the cytoplasm. Its function is as follows. Acts as an anti-CsrA protein, binds CsrA and prevents it from repressing translation of its target genes, one of which is flagellin. Binds to flagellin and participates in the assembly of the flagellum. The protein is Flagellar assembly factor FliW 2 of Wolinella succinogenes (strain ATCC 29543 / DSM 1740 / CCUG 13145 / JCM 31913 / LMG 7466 / NCTC 11488 / FDC 602W) (Vibrio succinogenes).